The primary structure comprises 166 residues: Crossover junction endodeoxyribonuclease RuvC (166 aa).

Residues aspartate 7, glutamate 67, and aspartate 139 contribute to the active site. Mg(2+) is bound by residues aspartate 7, glutamate 67, and aspartate 139.

Belongs to the RuvC family. In terms of assembly, homodimer which binds Holliday junction (HJ) DNA. The HJ becomes 2-fold symmetrical on binding to RuvC with unstacked arms; it has a different conformation from HJ DNA in complex with RuvA. In the full resolvosome a probable DNA-RuvA(4)-RuvB(12)-RuvC(2) complex forms which resolves the HJ. Requires Mg(2+) as cofactor.

The protein resides in the cytoplasm. It catalyses the reaction Endonucleolytic cleavage at a junction such as a reciprocal single-stranded crossover between two homologous DNA duplexes (Holliday junction).. In terms of biological role, the RuvA-RuvB-RuvC complex processes Holliday junction (HJ) DNA during genetic recombination and DNA repair. Endonuclease that resolves HJ intermediates. Cleaves cruciform DNA by making single-stranded nicks across the HJ at symmetrical positions within the homologous arms, yielding a 5'-phosphate and a 3'-hydroxyl group; requires a central core of homology in the junction. The consensus cleavage sequence is 5'-(A/T)TT(C/G)-3'. Cleavage occurs on the 3'-side of the TT dinucleotide at the point of strand exchange. HJ branch migration catalyzed by RuvA-RuvB allows RuvC to scan DNA until it finds its consensus sequence, where it cleaves and resolves the cruciform DNA. The polypeptide is Crossover junction endodeoxyribonuclease RuvC (Paramagnetospirillum magneticum (strain ATCC 700264 / AMB-1) (Magnetospirillum magneticum)).